The sequence spans 237 residues: MESSTHVSVGISQLFQCSYLEDQQEQLLIIQEPFLDPLLFERLLQLGFRRSGDAIYKPRCPSCSACIALRVPVRSFQPSKRQKRTLAKNKDLTVNWVNESSDEHYALYEKYINLRHFDGPMFPASREQYEHFVLCDWAPPGFVELRLEGKLLAVAVTDVLPTSLSAIYSFFDPDFDARSLGSQLILTQMALAADMDKAFVYLGYQIDANRKMCYKRLYRPYQILTQNGWEFHTNANL.

The protein belongs to the R-transferase family. Bpt subfamily.

It localises to the cytoplasm. The catalysed reaction is N-terminal L-glutamyl-[protein] + L-leucyl-tRNA(Leu) = N-terminal L-leucyl-L-glutamyl-[protein] + tRNA(Leu) + H(+). It carries out the reaction N-terminal L-aspartyl-[protein] + L-leucyl-tRNA(Leu) = N-terminal L-leucyl-L-aspartyl-[protein] + tRNA(Leu) + H(+). Its function is as follows. Functions in the N-end rule pathway of protein degradation where it conjugates Leu from its aminoacyl-tRNA to the N-termini of proteins containing an N-terminal aspartate or glutamate. This chain is Aspartate/glutamate leucyltransferase, found in Shewanella amazonensis (strain ATCC BAA-1098 / SB2B).